The primary structure comprises 261 residues: Major biofilm matrix component (261 aa).

The N-terminal stretch at 1–27 is a signal peptide; it reads MGMKKKLSLGVASAALGLALVGGGTWA. Residues 241–261 form a disordered region; it reads DHTDKDGYVKENEKAHSEDKN.

Belongs to the peptidase M73 family. Forms fibers. Fibers have variable length and are 10-15 nm width. Interacts with obg (AC P20964) in pull-down experiments.

It localises to the secreted. The protein resides in the forespore intermembrane space. In terms of biological role, tasA is the major protein component of the biofilm extracellular matrix. It forms amyloid fibers that bind cells together in the biofilm. Exhibits an antibacterial activity against a variety of Gram-positive and Gram-negative bacteria. In laboratory strains, is also involved in proper spore coat assembly. This chain is Major biofilm matrix component, found in Bacillus subtilis (strain 168).